Here is a 577-residue protein sequence, read N- to C-terminus: F-box-like/WD repeat-containing protein TBL1X (577 aa).

Residues 55 to 87 (TSDEVNFLVYRYLQESGFSHSAFTFGIESHISQ) form the LisH domain. The F-box-like domain occupies 92 to 137 (GTLVPPAALISILQKGLQYVEAEISINEDGTVFDGRPIESLSLIDA). Lysine 153 carries the post-translational modification N6-acetyllysine. Residues 177 to 202 (TTSAGVSHQNPSKNREATVNGEENRA) form a disordered region. Phosphoserine is present on serine 183. 8 WD repeats span residues 230–269 (GHESEVFICAWNPVSDLLASGSGDSTARIWNLNENSNGGS), 286–325 (PSNKDVTSLDWNTNGTLLATGSYDGFARIWTEDGNLASTL), 327–366 (QHKGPIFALKWNRKGNYILSAGVDKTTIIWDAHTGEAKQQ), 369–409 (FHSA…KTFQ), 410–449 (GHTNEVNAIKWDPSGMLLASCSDDMTLKIWSMKQEVCIHD), 452–500 (AHNK…CTHT), 503–542 (KHQEPVYSVAFSPDGKYLASGSFDKCVHIWNTQSGNLVHS), and 544–576 (RGTGGIFEVCWNARGDKVGASASDGSVCVLDLR). A Glycyl lysine isopeptide (Lys-Gly) (interchain with G-Cter in SUMO2) cross-link involves residue lysine 340.

It belongs to the WD repeat EBI family. Homotetramer; dimer of dimers. Component of the N-Cor repressor complex, at least composed of NCOR1, NCOR2, HDAC3, TBL1X, TBL1R, CORO2A and GPS2. Interacts with GPS2 (when sumoylated); leading to protect GPS2 against degradation by the proteasome. Component of a E3 ubiquitin ligase complex containing UBE2D1, SIAH1, CACYBP/SIP, SKP1, APC and TBL1X. Probably part of other corepressor complexes, that do not contain NCOR1 and NCOR2. Interacts with histones H2B, H3a and H4. Interacts with MECP2; recruits TBL1X to the heterochromatin foci. Interacts with USP44. In terms of tissue distribution, ubiquitous.

It localises to the nucleus. F-box-like protein involved in the recruitment of the ubiquitin/19S proteasome complex to nuclear receptor-regulated transcription units. Plays an essential role in transcription activation mediated by nuclear receptors. Probably acts as integral component of corepressor complexes that mediates the recruitment of the 19S proteasome complex, leading to the subsequent proteasomal degradation of transcription repressor complexes, thereby allowing cofactor exchange. The sequence is that of F-box-like/WD repeat-containing protein TBL1X (TBL1X) from Homo sapiens (Human).